The chain runs to 464 residues: Putative dipeptidase CPC735_014430 (464 aa).

Positions 1 to 34 are disordered; the sequence is MSTMSARDNEKGSARSQPSHAAASEIENVPRPSR. Residues 40 to 56 traverse the membrane as a helical segment; that stretch reads GTMIKVFIICACAGIVS. Zn(2+)-binding residues include H93, D95, and E206. C145 and C235 are joined by a disulfide. H233 serves as a coordination point for substrate. Zn(2+)-binding residues include H277 and H298. Residues R309 and D369 each contribute to the substrate site. Residue N382 is glycosylated (N-linked (GlcNAc...) asparagine).

This sequence belongs to the metallo-dependent hydrolases superfamily. Peptidase M19 family. Requires Zn(2+) as cofactor.

The protein resides in the membrane. It catalyses the reaction an L-aminoacyl-L-amino acid + H2O = 2 an L-alpha-amino acid. In terms of biological role, hydrolyzes a wide range of dipeptides. In Coccidioides posadasii (strain C735) (Valley fever fungus), this protein is Putative dipeptidase CPC735_014430.